The primary structure comprises 265 residues: Transcription factor BHLH062 (265 aa).

A disordered region spans residues 1–26; sequence MVPRDRVNAAAAGGGGEGRLVQSGIV. The basic motif; degenerate stretch occupies residues 35 to 48; the sequence is PKRIHKSEREKLKR. The bHLH domain occupies 35 to 85; that stretch reads PKRIHKSEREKLKRDKQNDLFNELGNLLEPDRQNNGKACVLGETTRILKDL. A helix-loop-helix motif region spans residues 49 to 85; that stretch reads DKQNDLFNELGNLLEPDRQNNGKACVLGETTRILKDL. The stretch at 75-130 forms a coiled coil; sequence LGETTRILKDLLSQVESLRKENSSLKNESHYVALERNELHDDNSMLRTEILELQNE. The disordered stretch occupies residues 200 to 265; sequence ESATSEDSEP…TNEEDRIGRS (66 aa). Residues 210 to 220 show a composition bias toward basic and acidic residues; that stretch reads SQEHGISDHVT. The span at 245-256 shows a compositional bias: polar residues; that stretch reads QDQQCSSGTSGT.

It belongs to the bHLH protein family. In terms of assembly, interacts with TIFY11A/JAZ9.

Its subcellular location is the nucleus. In terms of biological role, transcription factor that plays a positive role in salt stress tolerance. Interacts with TIFY11A/JAZ9 and binds to the promoter of some potassium ion transporter genes to regulate potassium homeostasis during salt stress. The protein is Transcription factor BHLH062 of Oryza sativa subsp. japonica (Rice).